We begin with the raw amino-acid sequence, 242 residues long: Terpene cyclase dpchB (242 aa).

Helical transmembrane passes span 16–36 (VVWI…ANYV), 51–71 (ALLP…MYAF), 78–95 (YVHF…YTAV), 114–134 (LIFV…AKQV), 141–161 (AWSA…QLLC), 169–189 (SYFL…QDII), and 207–227 (IWFV…LWYV).

This sequence belongs to the paxB family.

The protein resides in the membrane. It participates in secondary metabolite biosynthesis; terpenoid biosynthesis. Functionally, terpene cyclase; part of the gene cluster that mediates the biosynthesis of the diterpenoid pyrones higginsianins A and B. The first step of the pathway is the synthesis of the alpha-pyrone moiety by the polyketide synthase dpchA via condensation of one acetyl-CoA starter unit with 3 malonyl-CoA units and 2 methylations. The alpha-pyrone is then combined with geranylgeranyl pyrophosphate (GGPP) formed by the GGPP synthase dpchD through the action of the prenyltransferase dpchC to yield a linear alpha-pyrone diterpenoid. Subsequent steps in the diterpenoid pyrone biosynthetic pathway involve the decalin core formation, which is initiated by the epoxidation of the C10-C11 olefin by the FAD-dependent oxidoreductase dpchE, and is followed by a cyclization cascade catalyzed by the terpene cyclase dpchB. The short chain dehydrogenase/reductase dpchG then oxidizes the 8S hydroxy group to a ketone and the short chain dehydrogenase/reductase dpchH reduces the ketone to the 8R hydroxy group to yield higginsianin B. Finally, the FAD-dependent oxidoreductase dpchF converts higginsianin B into higginsianin A. This Colletotrichum higginsianum (strain IMI 349063) (Crucifer anthracnose fungus) protein is Terpene cyclase dpchB.